Here is a 337-residue protein sequence, read N- to C-terminus: MATASPAADGGRGRPWEGGLVSWPPAPPLTLPWTWMGPSWGQHPGHWGFPALTDPSASPAASLGIFEVRRVLDASGCSMLAPLQTGAARFSSYLLSRARKVLGSHLLSPCGVPELCSISTRKLAAHGFGAAMAAMVPFPPQRYHYFLVLDFEATCDKPQIHPQEIIEFPILKLNGRTMEIESTFHMYVQPVVHPQLTPFCTELTGIIQAMVDGQPSLQQVLERVDEWMAKEGLLDPNVKSIFVTCGDWDLKVMLPGQCHYLGLPVADYFKQWINLKKAYSFAMGCWPKNGLLDMNKGLSLQHIGRPHSGIDDCKNIANIMKTLAYRGFIFKQTSKPF.

The region spanning 146–320 is the Exonuclease domain; it reads FLVLDFEATC…DDCKNIANIM (175 aa). The Mg(2+) site is built by D150, E152, and D249. The Proton acceptor role is filled by E152. E152 is a binding site for AMP. The active-site Proton acceptor is H307. Position 307 (H307) interacts with AMP. D312 lines the Mg(2+) pocket.

In terms of assembly, interacts with PRNP. Mg(2+) serves as cofactor. In terms of tissue distribution, highly expressed in the brain, heart, thyroid and testis. Expressed at low levels in the muscle cells, liver, pancreas and kidney.

In Mus musculus (Mouse), this protein is ERI1 exoribonuclease 3 (Eri3).